A 420-amino-acid chain; its full sequence is Torsin-4A (420 aa).

A helical transmembrane segment spans residues 130-150; the sequence is CLLLFIAIVCFQIFNAIENLD. 202–209 serves as a coordination point for ATP; the sequence is GPSGVGKS.

It belongs to the ClpA/ClpB family. Torsin subfamily.

It is found in the membrane. This Xenopus tropicalis (Western clawed frog) protein is Torsin-4A (tor4a).